The following is a 92-amino-acid chain: Small ribosomal subunit protein uS19 (92 aa).

It belongs to the universal ribosomal protein uS19 family.

Functionally, protein S19 forms a complex with S13 that binds strongly to the 16S ribosomal RNA. The chain is Small ribosomal subunit protein uS19 from Vibrio vulnificus (strain CMCP6).